Reading from the N-terminus, the 417-residue chain is Equilibrative nucleotide transporter 7 (417 aa).

A run of 11 helical transmembrane segments spans residues 19-39, 54-74, 84-104, 110-130, 143-163, 184-204, 264-284, 293-315, 326-346, 353-373, and 392-412; these read LVCC…LTIT, VLTI…ATKE, IFGY…DLAS, VVAY…DAFV, PDFI…TSVL, LFIG…TLVF, LGIN…GFLY, GDWY…RFIP, KWIT…YFTA, WMLF…VCIF, and MCVF…LWLI.

This sequence belongs to the SLC29A/ENT transporter (TC 2.A.57) family. Expressed in leaves and flowers.

It localises to the cell membrane. Functionally, nucleoside transporter that can mediate uptake of adenosine, uridine, guanosine or cytidine when expressed in a heterologous system (yeast). This is Equilibrative nucleotide transporter 7 (ENT7) from Arabidopsis thaliana (Mouse-ear cress).